Consider the following 281-residue polypeptide: 2-dehydro-3-deoxyphosphooctonate aldolase (281 aa).

The protein belongs to the KdsA family.

Its subcellular location is the cytoplasm. The catalysed reaction is D-arabinose 5-phosphate + phosphoenolpyruvate + H2O = 3-deoxy-alpha-D-manno-2-octulosonate-8-phosphate + phosphate. It functions in the pathway carbohydrate biosynthesis; 3-deoxy-D-manno-octulosonate biosynthesis; 3-deoxy-D-manno-octulosonate from D-ribulose 5-phosphate: step 2/3. Its pathway is bacterial outer membrane biogenesis; lipopolysaccharide biosynthesis. This chain is 2-dehydro-3-deoxyphosphooctonate aldolase, found in Marinobacter nauticus (strain ATCC 700491 / DSM 11845 / VT8) (Marinobacter aquaeolei).